Consider the following 314-residue polypeptide: Ferrochelatase (314 aa).

Fe cation is bound by residues His-188 and Glu-269.

The protein belongs to the ferrochelatase family.

The protein localises to the cytoplasm. It carries out the reaction heme b + 2 H(+) = protoporphyrin IX + Fe(2+). Its pathway is porphyrin-containing compound metabolism; protoheme biosynthesis; protoheme from protoporphyrin-IX: step 1/1. In terms of biological role, catalyzes the ferrous insertion into protoporphyrin IX. This is Ferrochelatase from Campylobacter fetus subsp. fetus (strain 82-40).